The sequence spans 31 residues: U13-ctenitoxin-Pn1b (31 aa).

Intrachain disulfides connect cysteine 3–cysteine 17, cysteine 10–cysteine 21, and cysteine 16–cysteine 30.

As to expression, expressed by the venom gland.

It is found in the secreted. Its function is as follows. Acts as a neurotoxin. This chain is U13-ctenitoxin-Pn1b, found in Phoneutria nigriventer (Brazilian armed spider).